The chain runs to 443 residues: MKGIRRNLQKSYLKRCSEMYLRGLKVSGEIVSAKGIYLEAILPFANIGNEVEIQSNSRRIRGEVIGFSGDKVLVMPYEPVFGLRKGDKVLLKNELVSTKTGNGVVGKVVDPFGNPLDGGFIGFVEEKGLELPQINPLYRERIREVFDTGVRSVNALFTLGKGQKIGIFAGAGVGKSTLLGMITRHSKADVVVLALIGERGREVKEFLEEVLGEEGLKKSVVVVSTADQSPILKVKGAISAVVHAHHFASQGKDVLLLMDSITRLALAQREIGLAAGEPPTLKGFTPSVFQLLTRIAESCGAFKKGSITGIFTVLVEGDDISLDPIADSLMGVLDGHIILSRKRAVRGLFPAVDPVRSLSRLMPKLVSEEHFMKANFFKEVLSKFEDVEELVRIGLYKGGSNPLVDKVINNLEKVESFFKQKPEEKVNFEESLKALDEIYSLLK.

Ala169–Ser176 lines the ATP pocket.

The protein belongs to the ATPase alpha/beta chains family.

Its subcellular location is the cytoplasm. The catalysed reaction is ATP + H2O + 4 H(+)(in) = ADP + phosphate + 5 H(+)(out). In terms of biological role, probable catalytic subunit of a protein translocase for flagellum-specific export, or a proton translocase involved in local circuits at the flagellum. The sequence is that of Flagellum-specific ATP synthase (fliI) from Aquifex aeolicus (strain VF5).